A 390-amino-acid chain; its full sequence is Queuine tRNA-ribosyltransferase (390 aa).

Catalysis depends on Asp92, which acts as the Proton acceptor. Substrate is bound by residues 92–96 (DSGGF), Asp146, Gln195, and Gly222. Positions 253–259 (GVGTPED) are RNA binding. The active-site Nucleophile is the Asp272. An RNA binding; important for wobble base 34 recognition region spans residues 277–281 (TRNAR). Cys310, Cys312, Cys315, and His354 together coordinate Zn(2+).

This sequence belongs to the queuine tRNA-ribosyltransferase family. In terms of assembly, homodimer. Within each dimer, one monomer is responsible for RNA recognition and catalysis, while the other monomer binds to the replacement base PreQ1. Zn(2+) is required as a cofactor.

The catalysed reaction is 7-aminomethyl-7-carbaguanine + guanosine(34) in tRNA = 7-aminomethyl-7-carbaguanosine(34) in tRNA + guanine. The protein operates within tRNA modification; tRNA-queuosine biosynthesis. Functionally, catalyzes the base-exchange of a guanine (G) residue with the queuine precursor 7-aminomethyl-7-deazaguanine (PreQ1) at position 34 (anticodon wobble position) in tRNAs with GU(N) anticodons (tRNA-Asp, -Asn, -His and -Tyr). Catalysis occurs through a double-displacement mechanism. The nucleophile active site attacks the C1' of nucleotide 34 to detach the guanine base from the RNA, forming a covalent enzyme-RNA intermediate. The proton acceptor active site deprotonates the incoming PreQ1, allowing a nucleophilic attack on the C1' of the ribose to form the product. After dissociation, two additional enzymatic reactions on the tRNA convert PreQ1 to queuine (Q), resulting in the hypermodified nucleoside queuosine (7-(((4,5-cis-dihydroxy-2-cyclopenten-1-yl)amino)methyl)-7-deazaguanosine). The polypeptide is Queuine tRNA-ribosyltransferase (Verminephrobacter eiseniae (strain EF01-2)).